A 304-amino-acid polypeptide reads, in one-letter code: MTALSARMLTRSRSLGPGAGPRGCREEPGPLRRREAAAEARKSHSPVKRPRKAQRLRVAYEGSDSEKGEGAEPLKVPVWEPQDWQQQLVNIRAMRNKKDAPVDHLGTEHCYDSSAPPKVRRYQVLLSLMLSSQTKDQVTAGAMQRLRARGLTVDSILQTDDATLGKLIYPVGFWRSKVKYIKQTSAILQQHYGGDIPASVAELVALPGVGPKMAHLAMAVAWGTVSGIAVDTHVHRIANRLRWTKKATKSPEETRAALEEWLPRELWHEINGLLVGFGQQTCLPVHPRCHACLNQALCPAAQGL.

Residues Met-1–Arg-22 constitute a mitochondrion transit peptide. Positions Met-1–Glu-72 are disordered. A compositionally biased stretch (basic and acidic residues) spans Gly-23–Lys-42. The short motif at Pro-28 to Lys-52 is the Bipartite nuclear localization signal element. The segment covering Ser-43–Arg-55 has biased composition (basic residues). Phosphoserine occurs at positions 63 and 65. The HhH domain occupies His-191–His-215. Lys-212 (nucleophile; for N-glycosylase activity) is an active-site residue. Residues Cys-282, Cys-289, Cys-292, and Cys-298 each coordinate [4Fe-4S] cluster.

This sequence belongs to the Nth/MutY family. In terms of assembly, interacts with YBX1. Interacts with ERCC5/XPG; the interaction stimulates NTHL1 activity and NTHL1 binding to its DNA substrate. [4Fe-4S] cluster is required as a cofactor. Post-translationally, ubiquitinated by TRIM26; leading to proteasomal degradation. Widely expressed with highest levels in heart and lowest levels in lung and liver.

It localises to the nucleus. The protein resides in the mitochondrion. The catalysed reaction is 2'-deoxyribonucleotide-(2'-deoxyribose 5'-phosphate)-2'-deoxyribonucleotide-DNA = a 3'-end 2'-deoxyribonucleotide-(2,3-dehydro-2,3-deoxyribose 5'-phosphate)-DNA + a 5'-end 5'-phospho-2'-deoxyribonucleoside-DNA + H(+). With respect to regulation, APE1 displaces NTHL1 from the N-glycosylase-generated AP site in DNA, thereby increasing the turnover of the DNA N-glycosylase activity. AP lyase activity is stimulated by YBX1. ERCC5/XPG stimulates NTHL1 activity and NTHL1 binding to its DNA substrate. In terms of biological role, bifunctional DNA N-glycosylase with associated apurinic/apyrimidinic (AP) lyase function that catalyzes the first step in base excision repair (BER), the primary repair pathway for the repair of oxidative DNA damage. The DNA N-glycosylase activity releases the damaged DNA base from DNA by cleaving the N-glycosidic bond, leaving an AP site. The AP-lyase activity cleaves the phosphodiester bond 3' to the AP site by a beta-elimination. Primarily recognizes and repairs oxidative base damage of pyrimidines. Also has 8-oxo-7,8-dihydroguanine (8-oxoG) DNA glycosylase activity. Acts preferentially on DNA damage opposite guanine residues in DNA. Is able to process lesions in nucleosomes without requiring or inducing nucleosome disruption. The protein is Endonuclease III-like protein 1 of Homo sapiens (Human).